The primary structure comprises 964 residues: Translation initiation factor IF-2 (964 aa).

A disordered region spans residues 49-357; it reads QIGSAEPADD…QEFDEMQAPL (309 aa). Residues 62–85 are compositionally biased toward low complexity; it reads AKPAARKSQTSSKKTSKETTTAKP. A compositionally biased stretch (pro residues) spans 86–102; that stretch reads APGPKPGPGPKPTPGPR. The span at 103 to 117 shows a compositional bias: low complexity; that stretch reads PGSSSGPKPGRSSAA. Residues 159–169 show a composition bias toward pro residues; the sequence is PHAPAPKPKPG. Low complexity-rich tracts occupy residues 190-212 and 242-251; these read GLPSAARPGPRPGAGRRTGAPRP and GQGERMPRPG. Composition is skewed to gly residues over residues 252-261 and 284-334; these read GSQGSRGGSG and GRGG…GRGG. Over residues 335 to 346 the composition is skewed to basic residues; the sequence is GGRRGRKSRKQR. The 172-residue stretch at 458-629 folds into the tr-type G domain; sequence ARPPVVTVMG…AIVLTADAAL (172 aa). The G1 stretch occupies residues 467-474; the sequence is GHVDHGKT. 467–474 contacts GTP; sequence GHVDHGKT. The G2 stretch occupies residues 492–496; the sequence is GITQA. The tract at residues 517–520 is G3; sequence DTPG. Residues 517–521 and 571–574 contribute to the GTP site; these read DTPGH and NKID. A G4 region spans residues 571–574; that stretch reads NKID. Positions 607-609 are G5; it reads SAR.

The protein belongs to the TRAFAC class translation factor GTPase superfamily. Classic translation factor GTPase family. IF-2 subfamily.

The protein resides in the cytoplasm. One of the essential components for the initiation of protein synthesis. Protects formylmethionyl-tRNA from spontaneous hydrolysis and promotes its binding to the 30S ribosomal subunits. Also involved in the hydrolysis of GTP during the formation of the 70S ribosomal complex. This is Translation initiation factor IF-2 from Cutibacterium acnes (strain DSM 16379 / KPA171202) (Propionibacterium acnes).